We begin with the raw amino-acid sequence, 242 residues long: NAD-dependent protein deacetylase 1 (242 aa).

A Deacetylase sirtuin-type domain is found at 1–242; the sequence is MTITSWLAAS…LNEQLAEVDP (242 aa). Positions 19, 23, 30, 31, 97, 99, 100, and 115 each coordinate NAD(+). F30 contributes to the nicotinamide binding site. Nicotinamide-binding residues include V99 and D100. The active-site Proton acceptor is the H115. Positions 123, 126, 142, and 144 each coordinate Zn(2+). NAD(+) is bound by residues S182, S183, N207, and I226.

It belongs to the sirtuin family. Class U subfamily. Requires Zn(2+) as cofactor.

It is found in the cytoplasm. It catalyses the reaction N(6)-acetyl-L-lysyl-[protein] + NAD(+) + H2O = 2''-O-acetyl-ADP-D-ribose + nicotinamide + L-lysyl-[protein]. In terms of biological role, NAD-dependent protein deacetylase which modulates the activities of several enzymes which are inactive in their acetylated form. The sequence is that of NAD-dependent protein deacetylase 1 from Geobacillus kaustophilus (strain HTA426).